A 375-amino-acid chain; its full sequence is 23S rRNA (uracil(747)-C(5))-methyltransferase RlmC (375 aa).

C3, C11, C14, and C87 together coordinate [4Fe-4S] cluster. The S-adenosyl-L-methionine site is built by Q212, F241, E262, and N307. The active-site Nucleophile is C334.

It belongs to the class I-like SAM-binding methyltransferase superfamily. RNA M5U methyltransferase family. RlmC subfamily.

It carries out the reaction uridine(747) in 23S rRNA + S-adenosyl-L-methionine = 5-methyluridine(747) in 23S rRNA + S-adenosyl-L-homocysteine + H(+). Its function is as follows. Catalyzes the formation of 5-methyl-uridine at position 747 (m5U747) in 23S rRNA. In Salmonella agona (strain SL483), this protein is 23S rRNA (uracil(747)-C(5))-methyltransferase RlmC.